The sequence spans 92 residues: MELAVVWSVLVAQTMLALAMAFALYRMARGPRAQDRILGLDTLYINAMLMLITFGIRTANTVYFETALIIAVIGFASSIALAKFLMRGEVIE.

Helical transmembrane passes span 4–24 (AVVWSVLVAQTMLALAMAFAL), 36–56 (RILGLDTLYINAMLMLITFGI), and 62–82 (VYFETALIIAVIGFASSIALA).

It belongs to the CPA3 antiporters (TC 2.A.63) subunit F family. May form a hetero-oligomeric complex that consists of six subunits: PhaAB, PhaC, PhaD, PhaE, PhaF and PhaG.

Its subcellular location is the cell membrane. Functionally, part of a K(+) efflux system which is required for the adaptation of R.meliloti to alkaline pH as well as for the infection process during symbiotic nodule development. The polypeptide is Probable K(+)/H(+) antiporter subunit F (phaF) (Rhizobium meliloti (strain 1021) (Ensifer meliloti)).